The following is a 289-amino-acid chain: Protease HtpX homolog (289 aa).

A run of 2 helical transmembrane segments spans residues Leu-8–Gly-28 and Ser-29–Gln-49. His-132 contributes to the Zn(2+) binding site. Glu-133 is an active-site residue. A Zn(2+)-binding site is contributed by His-136. A run of 2 helical transmembrane segments spans residues Val-151–Ile-171 and Leu-183–Ile-203. Residue Glu-208 participates in Zn(2+) binding.

Belongs to the peptidase M48B family. Zn(2+) serves as cofactor.

Its subcellular location is the cell inner membrane. In Trichormus variabilis (strain ATCC 29413 / PCC 7937) (Anabaena variabilis), this protein is Protease HtpX homolog.